The following is a 494-amino-acid chain: Alpha-amylase-related protein (494 aa).

A signal peptide spans 1–20 (MFKFALALTLCLAGASLSLA). Gln21 is subject to Pyrrolidone carboxylic acid. Cys48 and Cys104 form a disulfide bridge. The Ca(2+) site is built by Asn118, Gln169, and Asp178. A disulfide bond links Cys157 and Cys171. A chloride-binding site is contributed by Arg206. The active-site Nucleophile is the Asp208. His212 serves as a coordination point for Ca(2+). The Proton donor role is filled by Glu245. Residues Asn308 and Arg343 each coordinate chloride. Cystine bridges form between Cys376/Cys382, Cys418/Cys441, and Cys448/Cys460.

It belongs to the glycosyl hydrolase 13 family. Monomer. It depends on Ca(2+) as a cofactor. Chloride serves as cofactor.

The protein resides in the secreted. The enzyme catalyses Endohydrolysis of (1-&gt;4)-alpha-D-glucosidic linkages in polysaccharides containing three or more (1-&gt;4)-alpha-linked D-glucose units.. This chain is Alpha-amylase-related protein (Amyrel), found in Drosophila dossoui (Fruit fly).